The sequence spans 710 residues: Pentatricopeptide repeat-containing protein At1g02060, chloroplastic (710 aa).

The N-terminal 21 residues, 1 to 21 (MVSSVPKLHALFVSKSQPVLR), are a transit peptide targeting the chloroplast. PPR repeat units lie at residues 137–171 (QDRY…GISP), 172–202 (SVLT…MRRT), 208–242 (DSYT…HCNP), 243–277 (DVVT…ATDV), 280–314 (NVVS…GLKP), 315–351 (NAVT…TFAP), 352–386 (DACT…KLHP), 387–421 (DSAS…EVLL), 429–459 (LAAA…LMKR), 463–497 (DPPS…EFVP), 498–532 (DLET…SYLP), and 533–567 (VATT…RIRQ).

It belongs to the PPR family. P subfamily.

It localises to the plastid. Its subcellular location is the chloroplast. This Arabidopsis thaliana (Mouse-ear cress) protein is Pentatricopeptide repeat-containing protein At1g02060, chloroplastic.